The sequence spans 1699 residues: DNA polymerase (1699 aa).

DOD-type homing endonuclease domains follow at residues 770–903 (LLGY…SLGI) and 1222–1361 (LIGL…LVGV).

It belongs to the DNA polymerase type-B family. In terms of processing, this protein undergoes a protein self splicing that involves a post-translational excision of the intervening region (intein) followed by peptide ligation.

The catalysed reaction is DNA(n) + a 2'-deoxyribonucleoside 5'-triphosphate = DNA(n+1) + diphosphate. In terms of biological role, in addition to polymerase activity, this DNA polymerase exhibits 3' to 5' exonuclease activity. Its function is as follows. PI-TspGE8I and PI-TspGE8II are endonucleases. The sequence is that of DNA polymerase (pol) from Thermococcus sp. (strain GE8).